Here is a 207-residue protein sequence, read N- to C-terminus: Ribosomal RNA small subunit methyltransferase G (207 aa).

Residues Gly73, Leu78, 124-125 (VE), and Arg139 contribute to the S-adenosyl-L-methionine site.

The protein belongs to the methyltransferase superfamily. RNA methyltransferase RsmG family.

The protein resides in the cytoplasm. The enzyme catalyses guanosine(527) in 16S rRNA + S-adenosyl-L-methionine = N(7)-methylguanosine(527) in 16S rRNA + S-adenosyl-L-homocysteine. Functionally, specifically methylates the N7 position of guanine in position 527 of 16S rRNA. This is Ribosomal RNA small subunit methyltransferase G from Escherichia coli O17:K52:H18 (strain UMN026 / ExPEC).